The following is a 522-amino-acid chain: Cytochrome P450 1A3 (522 aa).

A substrate-binding site is contributed by phenylalanine 229. Residue cysteine 463 coordinates heme.

The protein belongs to the cytochrome P450 family. Heme is required as a cofactor. As to expression, liver.

The protein localises to the endoplasmic reticulum membrane. It localises to the microsome membrane. It carries out the reaction an organic molecule + reduced [NADPH--hemoprotein reductase] + O2 = an alcohol + oxidized [NADPH--hemoprotein reductase] + H2O + H(+). Functionally, cytochromes P450 are a group of heme-thiolate monooxygenases. They oxidize a variety of structurally unrelated compounds, including steroids, fatty acids, and xenobiotics. In Oncorhynchus mykiss (Rainbow trout), this protein is Cytochrome P450 1A3 (cyp1a3).